The primary structure comprises 709 residues: Elongation factor G (709 aa).

One can recognise a tr-type G domain in the interval 8 to 297; the sequence is ANTRNIGIMA…AVIDYLPSPL (290 aa). Residues 17 to 24, 81 to 85, and 135 to 138 contribute to the GTP site; these read AHVDAGKT, DTPGH, and NKMD.

The protein belongs to the TRAFAC class translation factor GTPase superfamily. Classic translation factor GTPase family. EF-G/EF-2 subfamily.

It is found in the cytoplasm. Functionally, catalyzes the GTP-dependent ribosomal translocation step during translation elongation. During this step, the ribosome changes from the pre-translocational (PRE) to the post-translocational (POST) state as the newly formed A-site-bound peptidyl-tRNA and P-site-bound deacylated tRNA move to the P and E sites, respectively. Catalyzes the coordinated movement of the two tRNA molecules, the mRNA and conformational changes in the ribosome. This chain is Elongation factor G, found in Lactococcus lactis subsp. lactis (strain IL1403) (Streptococcus lactis).